Consider the following 149-residue polypeptide: HMG1/2-like protein (149 aa).

Composition is skewed to basic and acidic residues over residues 1 to 15 (MKGG…KAET) and 35 to 44 (KGKEPKDPNK). Disordered stretches follow at residues 1–52 (MKGG…PSAF) and 112–149 (AYNK…EDDD). The segment at residues 45–114 (PKRPPSAFFV…EYEITLQAYN (70 aa)) is a DNA-binding region (HMG box). Residues 134 to 149 (NDEDEDEEDEEDEDDD) show a composition bias toward acidic residues.

Belongs to the HMGB family.

The protein resides in the nucleus. This Vicia faba (Broad bean) protein is HMG1/2-like protein.